The following is a 335-amino-acid chain: ADP-L-glycero-D-manno-heptose-6-epimerase (335 aa).

Residues 11 to 12 (FI), 32 to 33 (DD), Lys-39, 75 to 79 (EGACS), and Asn-92 contribute to the NADP(+) site. Tyr-139 serves as the catalytic Proton acceptor. NADP(+) is bound at residue Lys-143. Substrate is bound at residue Asn-172. NADP(+) is bound by residues Val-173 and Lys-181. Residue Lys-181 is the Proton acceptor of the active site. Substrate contacts are provided by residues Arg-183, His-190, 204–207 (FGDY), Arg-217, and Tyr-296.

It belongs to the NAD(P)-dependent epimerase/dehydratase family. HldD subfamily. Homopentamer. The cofactor is NADP(+).

It carries out the reaction ADP-D-glycero-beta-D-manno-heptose = ADP-L-glycero-beta-D-manno-heptose. It participates in nucleotide-sugar biosynthesis; ADP-L-glycero-beta-D-manno-heptose biosynthesis; ADP-L-glycero-beta-D-manno-heptose from D-glycero-beta-D-manno-heptose 7-phosphate: step 4/4. Catalyzes the interconversion between ADP-D-glycero-beta-D-manno-heptose and ADP-L-glycero-beta-D-manno-heptose via an epimerization at carbon 6 of the heptose. This Polaromonas naphthalenivorans (strain CJ2) protein is ADP-L-glycero-D-manno-heptose-6-epimerase.